Here is a 160-residue protein sequence, read N- to C-terminus: uncharacterized protein (160 aa).

Residues 1–21 (MSIQTLIIISIVIFILWLTFT) form a helical membrane-spanning segment.

Belongs to the IIV-6 203L/325L family.

Its subcellular location is the membrane. This is an uncharacterized protein from Invertebrate iridescent virus 6 (IIV-6).